The following is a 157-amino-acid chain: Ribosomal RNA large subunit methyltransferase H (157 aa).

S-adenosyl-L-methionine is bound by residues L73, G105, and 124 to 129 (LSLMTF).

This sequence belongs to the RNA methyltransferase RlmH family. In terms of assembly, homodimer.

It is found in the cytoplasm. It carries out the reaction pseudouridine(1915) in 23S rRNA + S-adenosyl-L-methionine = N(3)-methylpseudouridine(1915) in 23S rRNA + S-adenosyl-L-homocysteine + H(+). Functionally, specifically methylates the pseudouridine at position 1915 (m3Psi1915) in 23S rRNA. This chain is Ribosomal RNA large subunit methyltransferase H, found in Flavobacterium johnsoniae (strain ATCC 17061 / DSM 2064 / JCM 8514 / BCRC 14874 / CCUG 350202 / NBRC 14942 / NCIMB 11054 / UW101) (Cytophaga johnsonae).